The following is a 461-amino-acid chain: Cysteine--tRNA ligase (461 aa).

Residue Cys-28 coordinates Zn(2+). The 'HIGH' region signature appears at 30–40; sequence VTIYDLCHIGH. Positions 211, 236, and 240 each coordinate Zn(2+). A 'KMSKS' region motif is present at residues 268–272; the sequence is KMSKS. Lys-271 is a binding site for ATP.

This sequence belongs to the class-I aminoacyl-tRNA synthetase family. As to quaternary structure, monomer. Zn(2+) serves as cofactor.

It is found in the cytoplasm. It catalyses the reaction tRNA(Cys) + L-cysteine + ATP = L-cysteinyl-tRNA(Cys) + AMP + diphosphate. The polypeptide is Cysteine--tRNA ligase (Aliivibrio fischeri (strain ATCC 700601 / ES114) (Vibrio fischeri)).